The primary structure comprises 387 residues: MNTSDLKQEFTEAFDTKPERVFFSPGRINLIGEHTDYNGGHVFPCAITIGTYGVYAPRTDTTVRMYSANIPDAGIVTFDVNDLSYDKAAGWTNYPKGMMDEIAKTGVKFDHGFDFYVHGNMPDGAGLSSSASIELLTGIMLNTGFNLGISQLDLVKIGQKCENNYVGVNSGIMDQFAVGMGKKDQAILLDTNTMDYSYAPVKLGNNVIVIMNTNKRRELADSKYNERRSECEEALRRLQTKLDIKSLGDLTNDQFDEAAYLINDETLIKRARHAVFENQRAIRATKALADDDLTTFGELVTASHVSLHFDYEVTGKELDTLAETAWKQPGVLGARMTGAGFGGCGIAIVDKDQVDAFKENVGKVYRDTIGYDADFYIAEIADGPKEL.

33-36 contacts substrate; that stretch reads EHTD. ATP contacts are provided by residues Ser67 and 124 to 130; that span reads GAGLSSS. Mg(2+) contacts are provided by Ser130 and Glu162. Asp174 acts as the Proton acceptor in catalysis. Tyr224 is a substrate binding site.

Belongs to the GHMP kinase family. GalK subfamily.

Its subcellular location is the cytoplasm. It catalyses the reaction alpha-D-galactose + ATP = alpha-D-galactose 1-phosphate + ADP + H(+). The protein operates within carbohydrate metabolism; galactose metabolism. Its function is as follows. Catalyzes the transfer of the gamma-phosphate of ATP to D-galactose to form alpha-D-galactose-1-phosphate (Gal-1-P). The sequence is that of Galactokinase from Lactiplantibacillus plantarum (strain ATCC BAA-793 / NCIMB 8826 / WCFS1) (Lactobacillus plantarum).